A 617-amino-acid polypeptide reads, in one-letter code: D-glucuronyl C5-epimerase (617 aa).

At 1 to 11 (MRCLAARVNYK) the chain is on the cytoplasmic side. Residues 12-28 (TLIIICALFTLVTVLLW) form a helical; Signal-anchor for type II membrane protein membrane-spanning segment. The Lumenal portion of the chain corresponds to 29–617 (NKCSSDKAIQ…YLKGSRAKHN (589 aa)). Substrate is bound by residues Y179, 184–186 (RDR), Q201, Y209, Q212, and Q215. Ca(2+) contacts are provided by T237, E239, T268, N269, and D392. Substrate contacts are provided by residues 429 to 432 (KLGE), 499 to 500 (EY), N510, Y514, Y560, R563, and 572 to 581 (NLARWDYHTT).

The protein belongs to the D-glucuronyl C5-epimerase family. Homodimer. Interacts with HS2ST1.

Its subcellular location is the golgi apparatus membrane. It carries out the reaction [heparosan-N-sulfate](n) = [heparan-N-sulfate](n). Its pathway is glycan metabolism; heparan sulfate biosynthesis. The protein operates within glycan metabolism; heparin biosynthesis. In terms of biological role, converts D-glucuronic acid residues adjacent to N-sulfate sugar residues to L-iduronic acid residues, both in maturing heparan sulfate (HS) and heparin chains. This is important for further modifications that determine the specificity of interactions between these glycosaminoglycans and proteins. The chain is D-glucuronyl C5-epimerase (GLCE) from Bos taurus (Bovine).